The following is a 182-amino-acid chain: Large ribosomal subunit protein uL6 (182 aa).

Belongs to the universal ribosomal protein uL6 family. In terms of assembly, part of the 50S ribosomal subunit.

Functionally, this protein binds to the 23S rRNA, and is important in its secondary structure. It is located near the subunit interface in the base of the L7/L12 stalk, and near the tRNA binding site of the peptidyltransferase center. In Nostoc punctiforme (strain ATCC 29133 / PCC 73102), this protein is Large ribosomal subunit protein uL6.